A 163-amino-acid chain; its full sequence is Transcriptional repressor NrdR (163 aa).

Residues 3–34 fold into a zinc finger; sequence CPFCAYADTRVVDSRLADDGGSVRRRRECPQC. Residues 49-139 form the ATP-cone domain; the sequence is PVVVKTDGRR…VYRRFEDVDA (91 aa).

It belongs to the NrdR family. Zn(2+) is required as a cofactor.

In terms of biological role, negatively regulates transcription of bacterial ribonucleotide reductase nrd genes and operons by binding to NrdR-boxes. The chain is Transcriptional repressor NrdR from Acidithiobacillus ferrooxidans (strain ATCC 23270 / DSM 14882 / CIP 104768 / NCIMB 8455) (Ferrobacillus ferrooxidans (strain ATCC 23270)).